The chain runs to 153 residues: Ubiquitin-conjugating enzyme E2-18 kDa (153 aa).

The 148-residue stretch at 2-149 (AATRRLTREL…AEEFTKKNAE (148 aa)) folds into the UBC core domain. The Glycyl thioester intermediate role is filled by Cys86.

The protein belongs to the ubiquitin-conjugating enzyme family.

The enzyme catalyses S-ubiquitinyl-[E1 ubiquitin-activating enzyme]-L-cysteine + [E2 ubiquitin-conjugating enzyme]-L-cysteine = [E1 ubiquitin-activating enzyme]-L-cysteine + S-ubiquitinyl-[E2 ubiquitin-conjugating enzyme]-L-cysteine.. Its pathway is protein modification; protein ubiquitination. Catalyzes the covalent attachment of ubiquitin to other proteins. This chain is Ubiquitin-conjugating enzyme E2-18 kDa (Ubc84D), found in Drosophila melanogaster (Fruit fly).